A 175-amino-acid chain; its full sequence is Ribosome maturation factor RimM (175 aa).

In terms of domain architecture, PRC barrel spans 96-175 (EGDYYWHDLI…TIEVDWDAGF (80 aa)).

Belongs to the RimM family. Binds ribosomal protein uS19.

It is found in the cytoplasm. An accessory protein needed during the final step in the assembly of 30S ribosomal subunit, possibly for assembly of the head region. Essential for efficient processing of 16S rRNA. May be needed both before and after RbfA during the maturation of 16S rRNA. It has affinity for free ribosomal 30S subunits but not for 70S ribosomes. This chain is Ribosome maturation factor RimM, found in Actinobacillus succinogenes (strain ATCC 55618 / DSM 22257 / CCUG 43843 / 130Z).